Here is a 295-residue protein sequence, read N- to C-terminus: Acetyl-coenzyme A carboxylase carboxyl transferase subunit beta (295 aa).

The segment at 1 to 20 is disordered; sequence MSWLSKLMPSGIRTENTPAK. The 268-residue stretch at 28–295 folds into the CoA carboxyltransferase N-terminal domain; it reads LWEKCSNCGS…QPHPQDADAA (268 aa). The Zn(2+) site is built by cysteine 32, cysteine 35, cysteine 51, and cysteine 54. A C4-type zinc finger spans residues 32–54; it reads CSNCGSALYGPELEENLEVCPKC.

The protein belongs to the AccD/PCCB family. As to quaternary structure, acetyl-CoA carboxylase is a heterohexamer composed of biotin carboxyl carrier protein (AccB), biotin carboxylase (AccC) and two subunits each of ACCase subunit alpha (AccA) and ACCase subunit beta (AccD). Requires Zn(2+) as cofactor.

The protein localises to the cytoplasm. The catalysed reaction is N(6)-carboxybiotinyl-L-lysyl-[protein] + acetyl-CoA = N(6)-biotinyl-L-lysyl-[protein] + malonyl-CoA. It functions in the pathway lipid metabolism; malonyl-CoA biosynthesis; malonyl-CoA from acetyl-CoA: step 1/1. Its function is as follows. Component of the acetyl coenzyme A carboxylase (ACC) complex. Biotin carboxylase (BC) catalyzes the carboxylation of biotin on its carrier protein (BCCP) and then the CO(2) group is transferred by the transcarboxylase to acetyl-CoA to form malonyl-CoA. In Xanthomonas campestris pv. campestris (strain B100), this protein is Acetyl-coenzyme A carboxylase carboxyl transferase subunit beta.